The sequence spans 345 residues: GTPase Obg (345 aa).

One can recognise an Obg domain in the interval M1–I159. Residues A160–D327 form the OBG-type G domain. GTP-binding positions include G166–S173, F191–H195, D212–G215, S279–D282, and S308–Q310. Residues S173 and T193 each coordinate Mg(2+).

This sequence belongs to the TRAFAC class OBG-HflX-like GTPase superfamily. OBG GTPase family. Monomer. Mg(2+) serves as cofactor.

It localises to the cytoplasm. An essential GTPase which binds GTP, GDP and possibly (p)ppGpp with moderate affinity, with high nucleotide exchange rates and a fairly low GTP hydrolysis rate. Plays a role in control of the cell cycle, stress response, ribosome biogenesis and in those bacteria that undergo differentiation, in morphogenesis control. The polypeptide is GTPase Obg (Azorhizobium caulinodans (strain ATCC 43989 / DSM 5975 / JCM 20966 / LMG 6465 / NBRC 14845 / NCIMB 13405 / ORS 571)).